A 142-amino-acid chain; its full sequence is Large ribosomal subunit protein bL17 (142 aa).

Belongs to the bacterial ribosomal protein bL17 family. As to quaternary structure, part of the 50S ribosomal subunit. Contacts protein L32.

This is Large ribosomal subunit protein bL17 from Chlamydia muridarum (strain MoPn / Nigg).